Consider the following 246-residue polypeptide: Adenosylcobinamide-GDP ribazoletransferase (246 aa).

The next 6 membrane-spanning stretches (helical) occupy residues F37 to L57, A64 to A84, L100 to L122, A139 to M159, L185 to W205, and A223 to I243.

It belongs to the CobS family. Mg(2+) serves as cofactor.

The protein localises to the cell inner membrane. It catalyses the reaction alpha-ribazole + adenosylcob(III)inamide-GDP = adenosylcob(III)alamin + GMP + H(+). The enzyme catalyses alpha-ribazole 5'-phosphate + adenosylcob(III)inamide-GDP = adenosylcob(III)alamin 5'-phosphate + GMP + H(+). Its pathway is cofactor biosynthesis; adenosylcobalamin biosynthesis; adenosylcobalamin from cob(II)yrinate a,c-diamide: step 7/7. In terms of biological role, joins adenosylcobinamide-GDP and alpha-ribazole to generate adenosylcobalamin (Ado-cobalamin). Also synthesizes adenosylcobalamin 5'-phosphate from adenosylcobinamide-GDP and alpha-ribazole 5'-phosphate. This Novosphingobium aromaticivorans (strain ATCC 700278 / DSM 12444 / CCUG 56034 / CIP 105152 / NBRC 16084 / F199) protein is Adenosylcobinamide-GDP ribazoletransferase.